We begin with the raw amino-acid sequence, 336 residues long: Formimidoylglutamase (336 aa).

Residues His-129, Asp-160, His-162, Asp-164, Asp-257, and Asp-259 each contribute to the Mn(2+) site.

The protein belongs to the arginase family. The cofactor is Mn(2+).

It catalyses the reaction N-formimidoyl-L-glutamate + H2O = formamide + L-glutamate. It participates in amino-acid degradation; L-histidine degradation into L-glutamate; L-glutamate from N-formimidoyl-L-glutamate (hydrolase route): step 1/1. Its function is as follows. Catalyzes the conversion of N-formimidoyl-L-glutamate to L-glutamate and formamide. The sequence is that of Formimidoylglutamase from Vibrio vulnificus (strain YJ016).